Reading from the N-terminus, the 428-residue chain is Lipoamide acyltransferase component of branched-chain alpha-keto acid dehydrogenase complex (428 aa).

In terms of domain architecture, Lipoyl-binding spans 3–78 (THVIKMPDIG…AVGGELIRLE (76 aa)). Lys44 is subject to N6-lipoyllysine. A disordered region spans residues 88 to 145 (SPAAATPAAPVAATPEKPKEAPVAAPKAAAEAPRALRDSEAPRQRRQPGERPLASPAV). Residues 89–120 (PAAATPAAPVAATPEKPKEAPVAAPKAAAEAP) are compositionally biased toward low complexity. The span at 121 to 136 (RALRDSEAPRQRRQPG) shows a compositional bias: basic and acidic residues. Residues 140-177 (LASPAVRQRARDLGIELQFVQGSGPAGRVLHEDLDAYL) enclose the Peripheral subunit-binding (PSBD) domain. Active-site residues include His400 and Asp404.

This sequence belongs to the 2-oxoacid dehydrogenase family. In terms of assembly, forms a 24-polypeptide structural core with octahedral symmetry. Requires (R)-lipoate as cofactor.

It carries out the reaction N(6)-[(R)-dihydrolipoyl]-L-lysyl-[protein] + 2-methylpropanoyl-CoA = N(6)-[(R)-S(8)-2-methylpropanoyldihydrolipoyl]-L-lysyl-[protein] + CoA. Its function is as follows. The branched-chain alpha-keto dehydrogenase complex catalyzes the overall conversion of alpha-keto acids to acyl-CoA and CO(2). It contains multiple copies of three enzymatic components: branched-chain alpha-keto acid decarboxylase (E1), lipoamide acyltransferase (E2) and lipoamide dehydrogenase (E3). This chain is Lipoamide acyltransferase component of branched-chain alpha-keto acid dehydrogenase complex (bkdB), found in Pseudomonas aeruginosa (strain ATCC 15692 / DSM 22644 / CIP 104116 / JCM 14847 / LMG 12228 / 1C / PRS 101 / PAO1).